We begin with the raw amino-acid sequence, 506 residues long: Gamma-aminobutyric acid receptor subunit epsilon (506 aa).

A signal peptide spans 1–22; sequence MLSKVLPVLLGILLILQSRVEG. The disordered stretch occupies residues 23–66; that stretch reads PQTESKNEASSRDVVYGPQPQPLENQLLSEETKSTETETGSRVG. The Extracellular segment spans residues 23–280; that stretch reads PQTESKNEAS…FNVSRRFGYV (258 aa). Asparagine 134 is a glycosylation site (N-linked (GlcNAc...) asparagine). Residues cysteine 195 and cysteine 209 are joined by a disulfide bond. The N-linked (GlcNAc...) asparagine glycan is linked to asparagine 252. A helical membrane pass occupies residues 281 to 301; sequence AFQNYVPSSVTTMLSWVSFWI. At 302 to 307 the chain is on the cytoplasmic side; it reads KTESAP. A helical transmembrane segment spans residues 308–327; sequence ARTSLGITSVLTMTTLGTFS. Over 328–343 the chain is Extracellular; sequence RKNFPRVSYITALDFY. Residues 344-364 form a helical membrane-spanning segment; sequence IAICFVFCFCALLEFAVLNFL. The Cytoplasmic segment spans residues 365–485; that stretch reads IYNQTKAHAS…HVYRLDNYSR (121 aa). The segment at 413 to 438 is disordered; that stretch reads EGSDGEERPSCSAQQPPSPGSPEGPR. A helical membrane pass occupies residues 486-506; that stretch reads VVFPVTFFFFNVLYWLVCLNL.

This sequence belongs to the ligand-gated ion channel (TC 1.A.9) family. Gamma-aminobutyric acid receptor (TC 1.A.9.5) subfamily. GABRE sub-subfamily. Heteropentamer, formed by a combination of alpha (GABRA1-6), beta (GABRB1-3), gamma (GABRG1-3), delta (GABRD), epsilon (GABRE), rho (GABRR1-3), pi (GABRP) and theta (GABRQ) chains, each subunit exhibiting distinct physiological and pharmacological properties. Expressed in many tissues. Highest levels of expression in adult heart and placenta.

Its subcellular location is the cell membrane. It localises to the postsynaptic cell membrane. The catalysed reaction is chloride(in) = chloride(out). With respect to regulation, potentiated by pentobarbital, loreclezole, and lanthanum and inhibited by zinc and furosemide. Introduction of the epsilon subunit to the receptor complex resulted in diminished modulatory effects by etomidate, propofol, pregnanolone and flurazepam. Epsilon subunit of the heteropentameric ligand-gated chloride channel gated by gamma-aminobutyric acid (GABA), a major inhibitory neurotransmitter in the brain. GABA-gated chloride channels, also named GABA(A) receptors (GABAAR), consist of five subunits arranged around a central pore and contain GABA active binding site(s) located at the alpha and beta subunit interfaces. When activated by GABA, GABAARs selectively allow the flow of chloride anions across the cell membrane down their electrochemical gradient. GABAARs containing epsilon subunits also permit spontaneous chloride channel activity while preserving the structural information required for GABA-gated openings. GABARs containing epsilon subunit may regulate cardiac function. The protein is Gamma-aminobutyric acid receptor subunit epsilon of Homo sapiens (Human).